The following is a 42-amino-acid chain: Photosystem I reaction center subunit IX (42 aa).

Residues 8 to 28 (YLSTIPVVGAIWLTFTAGFII) form a helical membrane-spanning segment.

The protein belongs to the PsaJ family.

The protein resides in the plastid. Its subcellular location is the chloroplast thylakoid membrane. In terms of biological role, may help in the organization of the PsaE and PsaF subunits. This chain is Photosystem I reaction center subunit IX, found in Gracilaria tenuistipitata var. liui (Red alga).